The chain runs to 316 residues: Melanocyte-stimulating hormone receptor (316 aa).

The Extracellular portion of the chain corresponds to Met1–Glu37. Residue Asn29 is glycosylated (N-linked (GlcNAc...) asparagine). A helical membrane pass occupies residues Val38 to Ile63. The Cytoplasmic portion of the chain corresponds to Ala64–Pro72. Residues Met73–Val93 form a helical membrane-spanning segment. Residues Asp94 to Asn117 lie on the Extracellular side of the membrane. A helical transmembrane segment spans residues Val118 to Val139. Over Asp140–Arg162 the chain is Cytoplasmic. The chain crosses the membrane as a helical span at residues Ala163–Tyr182. Topologically, residues Asp183 to Cys190 are extracellular. The helical transmembrane segment at Leu191–Leu210 threads the bilayer. Topologically, residues Ala211–Pro239 are cytoplasmic. A helical membrane pass occupies residues Val240–Leu265. At Cys266–Asn278 the chain is on the extracellular side. Residues Phe279–Phe299 form a helical membrane-spanning segment. Over His300–Trp316 the chain is Cytoplasmic. Residue Cys314 is the site of S-palmitoyl cysteine attachment.

The protein belongs to the G-protein coupled receptor 1 family. Interacts with MGRN1, but does not undergo MGRN1-mediated ubiquitination; this interaction competes with GNAS-binding and thus inhibits agonist-induced cAMP production. Interacts with OPN3; the interaction results in a decrease in MC1R-mediated cAMP signaling and ultimately a decrease in melanin production in melanocytes.

It is found in the cell membrane. Functionally, receptor for MSH (alpha, beta and gamma) and ACTH. The activity of this receptor is mediated by G proteins which activate adenylate cyclase. Mediates melanogenesis, the production of eumelanin (black/brown) and phaeomelanin (red/yellow), via regulation of cAMP signaling in melanocytes. The polypeptide is Melanocyte-stimulating hormone receptor (MC1R) (Gorilla gorilla gorilla (Western lowland gorilla)).